The following is a 1124-amino-acid chain: Putative DNA mismatch repair protein mutS homolog L359 (1124 aa).

779-786 contributes to the ATP binding site; sequence SNNWAGKS.

It belongs to the DNA mismatch repair MutS family.

In terms of biological role, may be involved in DNA-mismatch repair. The polypeptide is Putative DNA mismatch repair protein mutS homolog L359 (Acanthamoeba polyphaga (Amoeba)).